The following is a 169-amino-acid chain: DNA damage-inducible transcript 3 protein (169 aa).

The segment at 10 to 18 (FGTLSSWEL) is interaction with TRIB3. The tract at residues 10-26 (FGTLSSWELEAWYEDLQ) is N-terminal. Ser-14, Ser-15, Ser-30, and Ser-31 each carry phosphoserine; by CK2. A disordered region spans residues 32–139 (DENGGTYVSP…KVAQLAEENE (108 aa)). Over residues 74-89 (TSTSQSPHSPDSSQSS) the composition is skewed to low complexity. 2 positions are modified to phosphoserine; by MAPK14: Ser-79 and Ser-82. In terms of domain architecture, bZIP spans 99 to 162 (QGRTRKRKQS…EATRRALIDR (64 aa)). Positions 101-130 (RTRKRKQSGHSPARAGKQRMKEKEQENERK) are basic motif. Over residues 119–139 (RMKEKEQENERKVAQLAEENE) the composition is skewed to basic and acidic residues. The leucine-zipper stretch occupies residues 134–148 (LAEENERLKQEIERL).

This sequence belongs to the bZIP family. In terms of assembly, heterodimer. Interacts with TCF7L2/TCF4, EP300/P300, HDAC1, HDAC5 and HDAC6. Interacts with TRIB3 which blocks its association with EP300/P300. Interacts with FOXO3, CEBPB and ATF4. As to quaternary structure, interacts with isoform AltDDIT3 of DDIT3. Post-translationally, ubiquitinated, leading to its degradation by the proteasome. Phosphorylation at serine residues by MAPK14 enhances its transcriptional activation activity while phosphorylation at serine residues by CK2 inhibits its transcriptional activation activity.

Its subcellular location is the cytoplasm. The protein localises to the nucleus. Its function is as follows. Multifunctional transcription factor in endoplasmic reticulum (ER) stress response. Plays an essential role in the response to a wide variety of cell stresses and induces cell cycle arrest and apoptosis in response to ER stress. Plays a dual role both as an inhibitor of CCAAT/enhancer-binding protein (C/EBP) function and as an activator of other genes. Acts as a dominant-negative regulator of C/EBP-induced transcription: dimerizes with members of the C/EBP family, impairs their association with C/EBP binding sites in the promoter regions, and inhibits the expression of C/EBP regulated genes. Positively regulates the transcription of TRIB3, IL6, IL8, IL23, TNFRSF10B/DR5, PPP1R15A/GADD34, BBC3/PUMA, BCL2L11/BIM and ERO1L. Negatively regulates; expression of BCL2 and MYOD1, ATF4-dependent transcriptional activation of asparagine synthetase (ASNS), CEBPA-dependent transcriptional activation of hepcidin (HAMP) and CEBPB-mediated expression of peroxisome proliferator-activated receptor gamma (PPARG). Together with ATF4, mediates ER-mediated cell death by promoting expression of genes involved in cellular amino acid metabolic processes, mRNA translation and the unfolded protein response (UPR) in response to ER stress. Inhibits the canonical Wnt signaling pathway by binding to TCF7L2/TCF4, impairing its DNA-binding properties and repressing its transcriptional activity. Plays a regulatory role in the inflammatory response through the induction of caspase-11 (CASP4/CASP11) which induces the activation of caspase-1 (CASP1) and both these caspases increase the activation of pro-IL1B to mature IL1B which is involved in the inflammatory response. Acts as a major regulator of postnatal neovascularization through regulation of endothelial nitric oxide synthase (NOS3)-related signaling. The chain is DNA damage-inducible transcript 3 protein (DDIT3) from Homo sapiens (Human).